The chain runs to 220 residues: Glycerol-3-phosphate acyltransferase (220 aa).

6 helical membrane passes run 11-31, 70-90, 96-116, 127-147, 153-173, and 193-213; these read INVIFTLLGYLIGGIPFGYAL, LLVLILDLFKGMFAVFLSKLF, LQWMVAIASILGHCYSPFLNF, GSVVLLIPIESLIGLTVWFFV, ISSLASILGVGTATVLIFFVP, and MVLIFIFTLIKHAGNIFNLLA.

This sequence belongs to the PlsY family. Probably interacts with PlsX.

It localises to the cell inner membrane. It carries out the reaction an acyl phosphate + sn-glycerol 3-phosphate = a 1-acyl-sn-glycero-3-phosphate + phosphate. It functions in the pathway lipid metabolism; phospholipid metabolism. Functionally, catalyzes the transfer of an acyl group from acyl-phosphate (acyl-PO(4)) to glycerol-3-phosphate (G3P) to form lysophosphatidic acid (LPA). This enzyme utilizes acyl-phosphate as fatty acyl donor, but not acyl-CoA or acyl-ACP. The chain is Glycerol-3-phosphate acyltransferase from Helicobacter pylori (strain HPAG1).